An 81-amino-acid chain; its full sequence is Putative defensin-like protein 188 (81 aa).

Positions M1–S19 are cleaved as a signal peptide. 4 cysteine pairs are disulfide-bonded: C31–C81, C37–C57, C43–C75, and C47–C77.

This sequence belongs to the DEFL family.

It is found in the secreted. This Arabidopsis thaliana (Mouse-ear cress) protein is Putative defensin-like protein 188 (LCR41).